Consider the following 261-residue polypeptide: Epidermal growth factor-binding protein type B (261 aa).

A signal peptide spans 1–16 (MWFLILFLALSLGGID). The propeptide at 17-24 (AAPPLQSR) is activation peptide. The Peptidase S1 domain maps to 25–258 (VVGGFNCKKN…FNSWIKDTMM (234 aa)). Cystine bridges form between cysteine 31-cysteine 173, cysteine 50-cysteine 66, cysteine 152-cysteine 219, cysteine 184-cysteine 198, and cysteine 209-cysteine 234. Residue histidine 65 is the Charge relay system of the active site. Residue asparagine 102 is glycosylated (N-linked (GlcNAc...) asparagine). Residue aspartate 120 is the Charge relay system of the active site. Serine 213 functions as the Charge relay system in the catalytic mechanism.

It belongs to the peptidase S1 family. Kallikrein subfamily.

The catalysed reaction is Hydrolyzes mouse Ren2 protein (a species of prorenin present in the submandibular gland) on the carboxy side of the arginine residue at the Lys-Arg-|- pair in the N-terminus, to yield mature renin.. In terms of biological role, cleaves REN2 at a dibasic site to yield mature renin. The chain is Epidermal growth factor-binding protein type B (Egfbp2) from Mus musculus (Mouse).